Reading from the N-terminus, the 247-residue chain is LHFPL tetraspan subfamily member 4 protein (247 aa).

4 helical membrane-spanning segments follow: residues 22-42 (IGVL…VVFI), 97-117 (FFVL…ALFF), 127-147 (ICAW…MIFP), and 178-198 (ILAI…FVLG).

It belongs to the LHFP family. Interacts with GABA(A) receptor subunits. Interacts with GABRB3. Interacts with GABRA2. Interacts with GABRG2. Identified in a complex of 720 kDa composed of LHFPL4, NLGN2, GABRA1, GABRB2, GABRG2 and GABRB3. Interacts with GABRA1. Interacts with NLGN2; leading to mutual regulation of protein level and synaptic clustering.

Its subcellular location is the cell projection. It localises to the dendrite. It is found in the postsynaptic cell membrane. Its function is as follows. Plays a role in the regulation of inhibitory synapse formation and function by being involved in maintening gamma-aminobutyric acid receptors (GABAARs) clustering and their associated scaffold proteins at inhibitory synaptic sites. Acts in concert with NLGN2 to recruit or stabilize GABAARs. In Bos taurus (Bovine), this protein is LHFPL tetraspan subfamily member 4 protein.